The chain runs to 291 residues: G1/S-specific cyclin-D1 (291 aa).

Residue Thr-282 is modified to Phosphothreonine.

The protein belongs to the cyclin family. Cyclin D subfamily. In terms of assembly, interacts with the CDK4 and CDK6 protein kinases to form a serine/threonine kinase holoenzyme complex. The cyclin subunit imparts substrate specificity to the complex. Phosphorylation at Thr-282 by MAP kinases is required for ubiquitination and degradation by the DCX(AMBRA1) complex. In terms of processing, ubiquitinated by the DCX(AMBRA1) complex during the transition from G1 to S cell phase, leading to its degradation. The DCX(AMBRA1) complex represents the major regulator of CCND1 stability during the G1/S transition.

It localises to the nucleus. The protein localises to the cytoplasm. Functionally, regulatory component of the cyclin D1-CDK4 (DC) complex that phosphorylates and inhibits members of the retinoblastoma (RB) protein family including RB1 and regulates the cell-cycle during G(1)/S transition. Phosphorylation of RB1 allows dissociation of the transcription factor E2F from the RB/E2F complex and the subsequent transcription of E2F target genes which are responsible for the progression through the G(1) phase. Hypophosphorylates RB1 in early G(1) phase. Cyclin D-CDK4 complexes are major integrators of various mitogenenic and antimitogenic signals. This chain is G1/S-specific cyclin-D1 (ccnd1), found in Danio rerio (Zebrafish).